The following is a 561-amino-acid chain: Mercuric reductase (561 aa).

Residues 1–65 enclose the HMA domain; it reads MTTLKITGMT…AVAGLGYEAT (65 aa). A metal cation contacts are provided by C11 and C14. Residues A110, G130, and T135 each coordinate FAD. A disulfide bridge connects residues C136 and C141. Positions 145, 211, 403, and 411 each coordinate FAD. The Hg(2+) site is built by C558 and C559.

This sequence belongs to the class-I pyridine nucleotide-disulfide oxidoreductase family. As to quaternary structure, homodimer. FAD is required as a cofactor.

It catalyses the reaction Hg + NADP(+) + H(+) = Hg(2+) + NADPH. In terms of biological role, resistance to Hg(2+) in bacteria appears to be governed by a specialized system which includes mercuric reductase. MerA protein is responsible for volatilizing mercury as Hg(0). This is Mercuric reductase (merA) from Acinetobacter calcoaceticus.